The following is a 1182-amino-acid chain: DNA-directed RNA polymerase subunit beta (1182 aa).

It belongs to the RNA polymerase beta chain family. As to quaternary structure, the RNAP catalytic core consists of 2 alpha, 1 beta, 1 beta' and 1 omega subunit. When a sigma factor is associated with the core the holoenzyme is formed, which can initiate transcription.

The catalysed reaction is RNA(n) + a ribonucleoside 5'-triphosphate = RNA(n+1) + diphosphate. Functionally, DNA-dependent RNA polymerase catalyzes the transcription of DNA into RNA using the four ribonucleoside triphosphates as substrates. The chain is DNA-directed RNA polymerase subunit beta from Fervidobacterium nodosum (strain ATCC 35602 / DSM 5306 / Rt17-B1).